Consider the following 287-residue polypeptide: uncharacterized protein (287 aa).

Positions 1 to 20 are cleaved as a signal peptide; sequence MKVICGSVFLFSLFFQVVLG. Topologically, residues 22–201 are extracellular; it reads YFSSSSGNPN…AFYGPRRNIK (180 aa). N-linked (GlcNAc...) asparagine glycans are attached at residues Asn120, Asn154, and Asn166. Residues 202 to 222 form a helical membrane-spanning segment; that stretch reads AAIAVPSVILGLILVALVYYA. The Cytoplasmic portion of the chain corresponds to 223–287; that stretch reads YRKDTWKIYM…YYQSQVKKFH (65 aa).

It is found in the membrane. This is an uncharacterized protein from Schizosaccharomyces pombe (strain 972 / ATCC 24843) (Fission yeast).